A 182-amino-acid polypeptide reads, in one-letter code: MATTRLKTLYQETIVPKLTQQFQYTNVHQVPKLVKITVNRGLGEAAQNAKSLEASLTEIATITGQKPVVTRAKKAIAGFKIRQGMPVGIMVTLRGERMYAFFDRLISLSLPRIRDFRGISPKSFDGRGNYTLGVREQLIFPEIEYDSIDQIRGLDISIITTAKNDEEGRALLKEFGMPFRDQ.

Belongs to the universal ribosomal protein uL5 family. Part of the 50S ribosomal subunit; part of the 5S rRNA/L5/L18/L25 subcomplex. Contacts the 5S rRNA and the P site tRNA. Forms a bridge to the 30S subunit in the 70S ribosome.

Functionally, this is one of the proteins that bind and probably mediate the attachment of the 5S RNA into the large ribosomal subunit, where it forms part of the central protuberance. In the 70S ribosome it contacts protein S13 of the 30S subunit (bridge B1b), connecting the 2 subunits; this bridge is implicated in subunit movement. Contacts the P site tRNA; the 5S rRNA and some of its associated proteins might help stabilize positioning of ribosome-bound tRNAs. This chain is Large ribosomal subunit protein uL5, found in Nostoc sp. (strain PCC 7120 / SAG 25.82 / UTEX 2576).